Consider the following 498-residue polypeptide: Guanosine-5'-triphosphate,3'-diphosphate pyrophosphatase (498 aa).

This sequence belongs to the GppA/Ppx family. GppA subfamily.

The catalysed reaction is guanosine 3'-diphosphate 5'-triphosphate + H2O = guanosine 3',5'-bis(diphosphate) + phosphate + H(+). It participates in purine metabolism; ppGpp biosynthesis; ppGpp from GTP: step 2/2. Functionally, catalyzes the conversion of pppGpp to ppGpp. Guanosine pentaphosphate (pppGpp) is a cytoplasmic signaling molecule which together with ppGpp controls the 'stringent response', an adaptive process that allows bacteria to respond to amino acid starvation, resulting in the coordinated regulation of numerous cellular activities. This is Guanosine-5'-triphosphate,3'-diphosphate pyrophosphatase from Pectobacterium atrosepticum (strain SCRI 1043 / ATCC BAA-672) (Erwinia carotovora subsp. atroseptica).